The sequence spans 143 residues: Transcriptional regulator MraZ (143 aa).

SpoVT-AbrB domains follow at residues 5-47 (EYQH…PKDE) and 76-119 (AIES…SKDN).

It belongs to the MraZ family. As to quaternary structure, forms oligomers.

Its subcellular location is the cytoplasm. The protein resides in the nucleoid. This Oenococcus oeni (strain ATCC BAA-331 / PSU-1) protein is Transcriptional regulator MraZ.